The following is a 443-amino-acid chain: Mevalonate kinase (443 aa).

Residues Lys12, Ser138, and 143–149 (GAGLGSS) contribute to the ATP site. Positions 149 and 191 each coordinate Mg(2+). Asp202 functions as the Proton acceptor in the catalytic mechanism.

It belongs to the GHMP kinase family. Mevalonate kinase subfamily. Homodimer. Mg(2+) serves as cofactor.

The protein resides in the cytoplasm. It is found in the cytosol. The catalysed reaction is (R)-mevalonate + ATP = (R)-5-phosphomevalonate + ADP + H(+). It participates in isoprenoid biosynthesis; isopentenyl diphosphate biosynthesis via mevalonate pathway; isopentenyl diphosphate from (R)-mevalonate: step 1/3. With respect to regulation, farnesyl pyrophosphate and geranyl pyrophosphate inhibit mevalonate kinase by binding competitively at the ATP-binding site. Mevalonate kinase; part of the second module of ergosterol biosynthesis pathway that includes the middle steps of the pathway. ERG12 converts mevalonate into 5-phosphomevalonate. The second module is carried out in the vacuole and involves the formation of farnesyl diphosphate, which is also an important intermediate in the biosynthesis of ubiquinone, dolichol, heme and prenylated proteins. Activity by the mevalonate kinase ERG12 first converts mevalonate into 5-phosphomevalonate. 5-phosphomevalonate is then further converted to 5-diphosphomevalonate by the phosphomevalonate kinase ERG8. The diphosphomevalonate decarboxylase MVD1/ERG19 then produces isopentenyl diphosphate. The isopentenyl-diphosphate delta-isomerase IDI1 then catalyzes the 1,3-allylic rearrangement of the homoallylic substrate isopentenyl (IPP) to its highly electrophilic allylic isomer, dimethylallyl diphosphate (DMAPP). Finally the farnesyl diphosphate synthase ERG20 catalyzes the sequential condensation of isopentenyl pyrophosphate with dimethylallyl pyrophosphate, and then with the resultant geranylpyrophosphate to the ultimate product farnesyl pyrophosphate. The protein is Mevalonate kinase of Saccharomyces cerevisiae (strain ATCC 204508 / S288c) (Baker's yeast).